Consider the following 360-residue polypeptide: Peptide chain release factor 1 (360 aa).

The residue at position 235 (Q235) is an N5-methylglutamine. A disordered region spans residues 284-313 (AKRQQAEASTRRNLLGSGDRSDRNRTYNFP).

It belongs to the prokaryotic/mitochondrial release factor family. Post-translationally, methylated by PrmC. Methylation increases the termination efficiency of RF1.

It is found in the cytoplasm. Functionally, peptide chain release factor 1 directs the termination of translation in response to the peptide chain termination codons UAG and UAA. The chain is Peptide chain release factor 1 from Escherichia coli (strain UTI89 / UPEC).